The chain runs to 343 residues: CMP-N-acetylneuraminate-beta-galactosamide-alpha-2,3-sialyltransferase 1 (343 aa).

Residues 1–11 lie on the Cytoplasmic side of the membrane; the sequence is MAPMRKKSTLK. The helical; Signal-anchor for type II membrane protein transmembrane segment at 12–27 threads the bilayer; it reads LLTLLVLFIFLTSFFL. N-linked (GlcNAc...) asparagine glycosylation occurs at N28. Residues 28 to 343 lie on the Lumenal side of the membrane; that stretch reads NYSHTVVTTA…INKIRIFKGR (316 aa). Disulfide bonds link C62/C67, C64/C142, and C145/C284. N-linked (GlcNAc...) asparagine glycosylation occurs at N82. Q108 serves as a coordination point for substrate. N117 carries N-linked (GlcNAc...) asparagine glycosylation. The substrate site is built by N150, N173, Y233, Y269, G273, G293, H302, and H319. A glycan (N-linked (GlcNAc...) asparagine) is linked at N326.

It belongs to the glycosyltransferase 29 family. The soluble form derives from the membrane form by proteolytic processing. The long isoform is abundant in salivary gland, liver, lung, and colon mucosa. Both long and short forms are detected in submaxillary salivary glands.

It is found in the golgi apparatus. The protein resides in the golgi stack membrane. It localises to the trans-Golgi network membrane. Its subcellular location is the secreted. It catalyses the reaction a beta-D-galactosyl-(1-&gt;3)-N-acetyl-alpha-D-galactosaminyl derivative + CMP-N-acetyl-beta-neuraminate = an N-acetyl-alpha-neuraminyl-(2-&gt;3)-beta-D-galactosyl-(1-&gt;3)-N-acetyl-alpha-D-galactosaminyl derivative + CMP + H(+). It carries out the reaction a ganglioside GM1 (d18:1(4E)) + CMP-N-acetyl-beta-neuraminate = a ganglioside GD1a (d18:1(4E)) + CMP + H(+). The enzyme catalyses ganglioside GM1 (d18:1(4E)/18:0) + CMP-N-acetyl-beta-neuraminate = ganglioside GD1a (18:1(4E)/18:0) + CMP + H(+). The catalysed reaction is a ganglioside GA1 (d18:1(4E)) + CMP-N-acetyl-beta-neuraminate = a ganglioside GM1b (d18:1(4E)) + CMP + H(+). It catalyses the reaction a ganglioside GD1b + CMP-N-acetyl-beta-neuraminate = a ganglioside GT1b + CMP + H(+). It carries out the reaction a 3-O-[beta-D-galactosyl-(1-&gt;3)-N-acetyl-alpha-D-galactosaminyl]-L-threonyl-[protein] + CMP-N-acetyl-beta-neuraminate = a 3-O-[N-acetyl-alpha-neuraminyl-(2-&gt;3)-beta-D-galactosyl-(1-&gt;3)-N-acetyl-alpha-D-galactosaminyl]-L-threonyl-[protein] + CMP + H(+). The enzyme catalyses a 3-O-[beta-D-galactosyl-(1-&gt;3)-N-acetyl-alpha-D-galactosaminyl]-L-seryl-[protein] + CMP-N-acetyl-beta-neuraminate = 3-O-[N-acetyl-alpha-neuraminyl-(2-&gt;3)-beta-D-galactosyl-(1-&gt;3)-N-acetyl-alpha-D-galactosaminyl]-L-seryl-[protein] + CMP + H(+). The protein operates within protein modification; protein glycosylation. Its pathway is glycolipid biosynthesis. Its function is as follows. A beta-galactoside alpha2-&gt;3 sialyltransferase involved in terminal sialylation of glycoproteins and glycolipids. Catalyzes the transfer of sialic acid (N-acetyl-neuraminic acid; Neu5Ac) from the nucleotide sugar donor CMP-Neu5Ac onto acceptor Galbeta-(1-&gt;3)-GalNAc-terminated glycoconjugates through an alpha2-3 linkage. Adds sialic acid to the core 1 O-glycan, Galbeta-(1-&gt;3)-GalNAc-O-Ser/Thr, which is a major structure of mucin-type O-glycans. As part of a homeostatic mechanism that regulates CD8-positive T cell numbers, sialylates core 1 O-glycans of T cell glycoproteins, SPN/CD43 and PTPRC/CD45. Prevents premature apoptosis of thymic CD8-positive T cells prior to peripheral emigration, whereas in the secondary lymphoid organs controls the survival of CD8-positive memory T cells generated following a successful immune response. Transfers sialic acid to asialofetuin, presumably onto Galbeta-(1-&gt;3)-GalNAc-O-Ser. Sialylates GM1a, GA1 and GD1b gangliosides to form GD1a, GM1b and GT1b, respectively. This Sus scrofa (Pig) protein is CMP-N-acetylneuraminate-beta-galactosamide-alpha-2,3-sialyltransferase 1 (ST3GAL1).